Consider the following 156-residue polypeptide: Ribosomal RNA large subunit methyltransferase H (156 aa).

S-adenosyl-L-methionine is bound by residues leucine 73, glycine 104, and 123-128; that span reads LSSLTL.

It belongs to the RNA methyltransferase RlmH family. Homodimer.

The protein localises to the cytoplasm. The enzyme catalyses pseudouridine(1915) in 23S rRNA + S-adenosyl-L-methionine = N(3)-methylpseudouridine(1915) in 23S rRNA + S-adenosyl-L-homocysteine + H(+). In terms of biological role, specifically methylates the pseudouridine at position 1915 (m3Psi1915) in 23S rRNA. The polypeptide is Ribosomal RNA large subunit methyltransferase H (Neisseria gonorrhoeae (strain ATCC 700825 / FA 1090)).